The chain runs to 326 residues: MKPSIVLYKSIPADLHQRLEQHFTVNSFEGLSSDNQPELLSALQQAEGLIGSGGKIDQAFLERAPKLRAASTISVGYDNFDVDALSQRGIALMHTPTVLTETVADTMMALVLSSARRVVELAERVKAGEWQDSIGDDWFGVDVHHKTIGILGMGRIGMALAQRAHFGFSMPVLYTSRRPHEAAEKRFGARRCSLDTLLAEVDFLCITLPMTEQTYHMIGPEQLAKMKSSAILINAGRGPVVDEQALIAALQDGTIHAAGLDVFAQEPLPVESPLLKLPNVVAVPHIGSATHETRYNMAACAVDNLIAALTGTVTENCVNPQVLQQA.

Active-site residues include arginine 237 and glutamate 266. The Proton donor role is filled by histidine 285.

Belongs to the D-isomer specific 2-hydroxyacid dehydrogenase family. GhrB subfamily. As to quaternary structure, homodimer.

The protein resides in the cytoplasm. It carries out the reaction glycolate + NADP(+) = glyoxylate + NADPH + H(+). It catalyses the reaction (R)-glycerate + NAD(+) = 3-hydroxypyruvate + NADH + H(+). The catalysed reaction is (R)-glycerate + NADP(+) = 3-hydroxypyruvate + NADPH + H(+). In terms of biological role, catalyzes the NADPH-dependent reduction of glyoxylate and hydroxypyruvate into glycolate and glycerate, respectively. The polypeptide is Glyoxylate/hydroxypyruvate reductase B (Yersinia enterocolitica serotype O:8 / biotype 1B (strain NCTC 13174 / 8081)).